A 282-amino-acid polypeptide reads, in one-letter code: Bifunctional protein FolD 2 (282 aa).

Residues 164–166 (GRS) and Ser189 each bind NADP(+).

The protein belongs to the tetrahydrofolate dehydrogenase/cyclohydrolase family. Homodimer.

It carries out the reaction (6R)-5,10-methylene-5,6,7,8-tetrahydrofolate + NADP(+) = (6R)-5,10-methenyltetrahydrofolate + NADPH. The enzyme catalyses (6R)-5,10-methenyltetrahydrofolate + H2O = (6R)-10-formyltetrahydrofolate + H(+). It participates in one-carbon metabolism; tetrahydrofolate interconversion. Its function is as follows. Catalyzes the oxidation of 5,10-methylenetetrahydrofolate to 5,10-methenyltetrahydrofolate and then the hydrolysis of 5,10-methenyltetrahydrofolate to 10-formyltetrahydrofolate. The chain is Bifunctional protein FolD 2 from Lactobacillus johnsonii (strain CNCM I-12250 / La1 / NCC 533).